A 329-amino-acid chain; its full sequence is Isopentenyl-diphosphate delta-isomerase (329 aa).

4–5 contributes to the substrate binding site; the sequence is RK. Residues 59-61, Ser89, and Asn116 each bind FMN; that span reads AMT. Residue Gln146 coordinates substrate. Glu147 contributes to the Mg(2+) binding site. FMN contacts are provided by residues Lys178, Ser203, Thr208, 252-254, and 273-274; these read GVR and SR.

It belongs to the IPP isomerase type 2 family. In terms of assembly, homooctamer. Dimer of tetramers. It depends on FMN as a cofactor. NADPH serves as cofactor. Requires Mg(2+) as cofactor.

The protein localises to the cytoplasm. It catalyses the reaction isopentenyl diphosphate = dimethylallyl diphosphate. In terms of biological role, involved in the biosynthesis of isoprenoids. Catalyzes the 1,3-allylic rearrangement of the homoallylic substrate isopentenyl (IPP) to its allylic isomer, dimethylallyl diphosphate (DMAPP). This is Isopentenyl-diphosphate delta-isomerase from Streptococcus pyogenes serotype M28 (strain MGAS6180).